The sequence spans 480 residues: Voltage-gated potassium channel regulatory subunit KCNG2 (480 aa).

Disordered regions lie at residues 1–25 (MARLPGHPEVPGAEPGSAVRGGRGG) and 144–167 (AAEARATPPARGPQTSPGRALGSG). Topologically, residues 1-187 (MARLPGHPEV…DVVENPHSGL (187 aa)) are cytoplasmic. Residues 188 to 209 (AGKLFAYVSVAFVAVTAVGLCL) form a helical membrane-spanning segment. The Extracellular segment spans residues 210–230 (STMPDVRAEEERGECSTKCRN). A helical membrane pass occupies residues 231-252 (LFVLETVCVAWFSFEFLLRSLQ). Residues 253 to 263 (AESKCAFLRTP) lie on the Cytoplasmic side of the membrane. A helical transmembrane segment spans residues 264-284 (LAIIDILAILPFYVSLLAGLA). Over 285 to 296 (AGPTGSKMLERA) the chain is Extracellular. Residues 297–317 (GLVLRLLRALRVLYVMRLARH) form a helical; Voltage-sensor membrane-spanning segment. Residues 318–332 (SLGLRSLGLTVRRCA) are Cytoplasmic-facing. Residues 333 to 354 (REFGLLLLFLCVAMALFAPLVH) traverse the membrane as a helical segment. Topologically, residues 355–369 (LAERELGAHRDFSSV) are extracellular. Positions 370 to 381 (PASYWWAVISMT) form an intramembrane region, helical. The Selectivity filter motif lies at 382–387 (TVGYGD). Residues 382–389 (TVGYGDMV) lie within the membrane without spanning it. The Extracellular portion of the chain corresponds to 390–396 (PRSLPGQ). Residues 397–425 (VVALSSILSGILLMAFPVTSIFHTFSRSY) traverse the membrane as a helical segment. The Cytoplasmic segment spans residues 426–480 (SELKEQQQRAASPEPVLREDSTRDDSTRSASATEDSSQDPETAGAAGSLPGPVGP). The segment at 429–480 (KEQQQRAASPEPVLREDSTRDDSTRSASATEDSSQDPETAGAAGSLPGPVGP) is disordered. The span at 441–452 (VLREDSTRDDST) shows a compositional bias: basic and acidic residues.

It belongs to the potassium channel family. G (TC 1.A.1.2) subfamily. Kv6.2/KCNG2 sub-subfamily. Heterodimer with KCNB1. In terms of tissue distribution, highly expressed in heart, in particular in right and left atrium, and detected at lower levels in the right and left ventricle.

It localises to the cell membrane. Regulatory alpha-subunit of the voltage-gated potassium (Kv) channel which, when coassembled with KCNB1, can modulate the kinetics and conductance-voltage relationship. Modulates channel activity by shifting the threshold and the half-maximal activation to more negative values. Potassium channel subunit that does not form functional channels by itself. This Rattus norvegicus (Rat) protein is Voltage-gated potassium channel regulatory subunit KCNG2.